Reading from the N-terminus, the 996-residue chain is Oxysterol-binding protein homolog 3 (996 aa).

The tract at residues 1–183 is GOLD domain; sequence METIDIQNRS…KKKILFNASV (183 aa). Positions 75 to 114 are disordered; the sequence is GSSSNIEEHHRRSSQHSHSSSNGSDNKRKERSYSSLSISG. A phosphoserine mark is found at serine 190 and serine 193. At threonine 210 the chain carries Phosphothreonine. Residues 221 to 315 enclose the PH domain; the sequence is GRYLQGYLLK…WVDALQTCFD (95 aa). Threonine 323 carries the post-translational modification Phosphothreonine. Serine 324 is modified (phosphoserine). Phosphothreonine is present on residues threonine 325 and threonine 352. The interval 338-372 is disordered; sequence EVINKSSPQDHDHLTPTATTKSALSHRQHTQKDMD. An FFAT motif is present at residues 514 to 520; it reads EFFDAEE. A disordered region spans residues 556-611; that stretch reads KEVQLSGSEQIASSSVESYTTNDENHSRKHLKNRHKNRRRGHPHHQKTKSAQSSTE. Positions 558 to 577 are enriched in polar residues; sequence VQLSGSEQIASSSVESYTTN. Residues 582–603 show a composition bias toward basic residues; that stretch reads SRKHLKNRHKNRRRGHPHHQKT. Serine 605 bears the Phosphoserine mark. Residues 642 to 982 are OSBP-related domain (ORD); it reads SLLSFLRKNV…YITGPKSYWE (341 aa). Residues 657 to 660, lysine 717, 745 to 746, and 945 to 949 contribute to the a 1,2-diacyl-sn-glycero-3-phospho-(1D-myo-inositol 4-phosphate) site; these read SIAM, HR, and EQLQR.

The protein belongs to the OSBP family. Interacts with SCS2.

The protein localises to the cytoplasm. It localises to the endoplasmic reticulum membrane. Its function is as follows. Lipid transport protein (LTP) involved in non-vesicular transfer of lipids between membranes. Functions in phosphoinositide-coupled directional transport of various lipids by carrying the lipid molecule in a hydrophobic pocket and transferring it between membranes through the cytosol. Involved in maintenance of intracellular sterol distribution and homeostasis. May serve as a sensor of PI4P levels at PM-ER membrane contact site, regulating PI4P phosphatase SAC1 activity. May be involved in ergosterol transport from the plasma membrane (PM) to the ER, however it does not bind sterols directly. Plays a role in the positive regulation of vesicular transport of ceramide from the ER to the Golgi, negatively regulating COPII-mediated ER export of cargos. This chain is Oxysterol-binding protein homolog 3, found in Saccharomyces cerevisiae (strain ATCC 204508 / S288c) (Baker's yeast).